Consider the following 577-residue polypeptide: Hemagglutinin-neuraminidase (577 aa).

Residues methionine 1–arginine 22 are Intravirion-facing. Residues leucine 23–valine 45 traverse the membrane as a helical segment. The Virion surface segment spans residues tyrosine 46–valine 571. N-linked (GlcNAc...) asparagine; by host glycosylation is found at asparagine 119 and asparagine 144. The important for interaction with fusion/F protein stretch occupies residues glycine 124–tyrosine 152. 3 cysteine pairs are disulfide-bonded: cysteine 172/cysteine 196, cysteine 186/cysteine 247, and cysteine 238/cysteine 251. The segment at asparagine 234–serine 239 is involved in neuraminidase activity. 2 N-linked (GlcNAc...) asparagine; by host glycosylation sites follow: asparagine 341 and asparagine 433. Disulfide bonds link cysteine 344–cysteine 461 and cysteine 455–cysteine 465. 2 N-linked (GlcNAc...) asparagine; by host glycosylation sites follow: asparagine 481 and asparagine 538. Cysteine 531 and cysteine 542 are joined by a disulfide.

Belongs to the paramyxoviruses hemagglutinin-neuraminidase family. Homotetramer; composed of disulfide-linked homodimers. Interacts with F protein trimer. Interacts with host CG-1B; this interaction inhibits viral adsorption and replication rather than internalization.

It is found in the virion membrane. The protein resides in the host cell membrane. It catalyses the reaction Hydrolysis of alpha-(2-&gt;3)-, alpha-(2-&gt;6)-, alpha-(2-&gt;8)- glycosidic linkages of terminal sialic acid residues in oligosaccharides, glycoproteins, glycolipids, colominic acid and synthetic substrates.. Mediates the viral entry into the host cell together with fusion/F protein. Attaches the virus to sialic acid-containing cell receptors and thereby initiates infection. Binding of HN protein to the receptor induces a conformational change that allows the F protein to trigger virion/cell membranes fusion. In terms of biological role, neuraminidase activity ensures the efficient spread of the virus by dissociating the mature virions from the neuraminic acid containing glycoproteins. This chain is Hemagglutinin-neuraminidase (HN), found in Gallus gallus (Chicken).